The chain runs to 354 residues: Probable N-acetylmuramoyl-L-alanine amidase (354 aa).

The first 39 residues, 1 to 39 (MVKVINNFVKVNQYDRPGLKLAAVKGIVMHWTATPGASA), serve as a signal peptide directing secretion. An N-acetylmuramoyl-L-alanine amidase domain is found at 40–152 (LNERNYFNGT…YDVTNKGCPT (113 aa)).

This sequence belongs to the N-acetylmuramoyl-L-alanine amidase 2 family.

It is found in the secreted. It catalyses the reaction Hydrolyzes the link between N-acetylmuramoyl residues and L-amino acid residues in certain cell-wall glycopeptides.. The polypeptide is Probable N-acetylmuramoyl-L-alanine amidase (Bacillus licheniformis).